The primary structure comprises 683 residues: ATP-dependent zinc metalloprotease FtsH 2 (683 aa).

Over residues 1 to 12 (MADQTSQNDNQN) the composition is skewed to polar residues. Residues 1–21 (MADQTSQNDNQNGSGLPGGGP) form a disordered region. Residues 1-28 (MADQTSQNDNQNGSGLPGGGPSGTGRGR) lie on the Cytoplasmic side of the membrane. A helical membrane pass occupies residues 29–49 (LIIWVIAGTLLALWAYSYWGM). The Periplasmic segment spans residues 50-136 (GASGGERISY…VTKPESSFPW (87 aa)). A helical transmembrane segment spans residues 137-157 (GLVIMGLLPVLLLFGVGYIFL). Topologically, residues 158-683 (RRMQSQGQGL…ASGSADASGS (526 aa)) are cytoplasmic. An ATP-binding site is contributed by 228–235 (GPPGTGKT). His450 contacts Zn(2+). Glu451 is an active-site residue. Zn(2+) contacts are provided by His454 and Asp526. The tract at residues 627-683 (VNGDTDEIGHMPTTNGAAASEENGSADDHEPDEATVIEEDGESGEGRASGSADASGS) is disordered. Acidic residues predominate over residues 655 to 669 (HEPDEATVIEEDGES). Residues 672–683 (GRASGSADASGS) show a composition bias toward low complexity.

This sequence in the central section; belongs to the AAA ATPase family. In the C-terminal section; belongs to the peptidase M41 family. As to quaternary structure, homohexamer. Requires Zn(2+) as cofactor.

It localises to the cell inner membrane. Its function is as follows. Acts as a processive, ATP-dependent zinc metallopeptidase for both cytoplasmic and membrane proteins. Plays a role in the quality control of integral membrane proteins. This chain is ATP-dependent zinc metalloprotease FtsH 2, found in Salinibacter ruber (strain M8).